A 275-amino-acid polypeptide reads, in one-letter code: T cell receptor alpha chain MC.7.G5 (275 aa).

An N-terminal signal peptide occupies residues 1 to 21 (MACPGFLWALVISTCLEFSMA). The 95-residue stretch at 22–116 (QTVTQSQPEM…AAMYFCAYRS (95 aa)) folds into the Ig-like V-type domain. A t cell receptor alpha variable 38-2DV8 region spans residues 22–116 (QTVTQSQPEM…AAMYFCAYRS (95 aa)). A disulfide bridge connects residues C43 and C112. Positions 47-53 (TSESDYY) are CDR1. The CDR2 stretch occupies residues 71 to 81 (QEAYKQQNATE). N78 carries an N-linked (GlcNAc...) asparagine glycan. The segment at 112–124 (CAYRSAVNARLMF) is CDR3. The segment at 119 to 134 (NARLMFGDGTQLVVKP) is t cell receptor alpha joining 31. Residues 136-275 (IQNPDPAVYQ…LLMTLRLWSS (140 aa)) are t cell receptor alpha constant. An Ig-like C1-type domain is found at 154–242 (KSVCLFTDFD…LVEKSFETDT (89 aa)). A disulfide bond links C157 and C207. Residues N167, N201, N212, and N248 are each glycosylated (N-linked (GlcNAc...) asparagine). Residues 229 to 250 (CDVKLVEKSFETDTNLNFQNLS) form a connecting peptide region. The chain crosses the membrane as a helical span at residues 251-273 (VIGFRILLLKVAGFNLLMTLRLW). At 274-275 (SS) the chain is on the cytoplasmic side.

As to quaternary structure, disulfide-linked heterodimer with TRBV25-1*01J2S3*01C2*01 beta chain. The alpha-beta TR associates with the transmembrane signaling CD3 coreceptor proteins to form the TR-CD3 (TCR). The assembly of alpha-beta TR heterodimers with CD3 occurs in the endoplasmic reticulum where a single alpha-beta TR heterodimer associates with one CD3D-CD3E heterodimer, one CD3G-CD3E heterodimer and one CD247 homodimer forming a stable octameric structure. CD3D-CD3E and CD3G-CD3E heterodimers preferentially associate with TR alpha and TR beta chains (via TM domain), respectively. The association of the CD247 homodimer is the last step of TCR assembly in the endoplasmic reticulum and is required for transport to the cell surface. Expressed in MR1-restricted CD8-positive T cells.

It is found in the cell membrane. In terms of biological role, the alpha chain of TRAV38-2DV8*01J31*01C*01/TRBV25-1*01J2S3*01C2*01 alpha-beta T cell receptor (TR) clonotype that displays pan-cancer cell recognition via the invariant MR1 molecule. On CD8-positive T cell clone MC.7.G5, likely recognizes tumor-specific or -associated metabolite(s) essential for cancer cell survival, triggering killing of many cancer cell types including lung, melanoma, leukemia, colon, breast, prostate, bone and ovarian cancer cells. Mediates cancer cell cytotoxicity in an HLA-independent manner. Has no reactivity to healthy cells, even stressed or infected by bacteria. Antigen recognition initiates TR-CD3 clustering on the cell surface and intracellular activation of LCK that phosphorylates the ITAM motifs of CD3G, CD3D, CD3E and CD247 enabling the recruitment of ZAP70. In turn, ZAP70 phosphorylates LAT, which recruits numerous signaling molecules to form the LAT signalosome. The LAT signalosome propagates signal branching to three major signaling pathways, the calcium, the mitogen-activated protein kinase (MAPK) kinase and the nuclear factor NF-kappa-B (NF-kB) pathways, leading to the mobilization of transcription factors that are critical for gene expression and essential for T cell differentiation into effector/memory T cells. This chain is T cell receptor alpha chain MC.7.G5, found in Homo sapiens (Human).